The following is a 642-amino-acid chain: Tigger transposable element derived 5 (642 aa).

The tract at residues 1–54 (MYPASPSAGPALHPVPHRARLPRPRCLAEPPRSPAPGPGSTARPPPPAPGPRPR) is disordered. Pro residues predominate over residues 31-52 (PRSPAPGPGSTARPPPPAPGPR). The 52-residue stretch at 56-107 (AVKMTFRKAYSIKDKLQAIERVKGGERQASVCRDFGVPGGTLRGWLKDEPKL) folds into the HTH psq-type domain. 2 consecutive DNA-binding regions (H-T-H motif) follow at residues 83–103 (QASV…WLKD) and 154–187 (PVIQ…WQKR). The 74-residue stretch at 121-194 (QRKKMRLANE…QKRHGISSQR (74 aa)) folds into the HTH CENPB-type domain. The span at 198-208 (EAEPPVAGPAP) shows a compositional bias: low complexity. The interval 198–230 (EAEPPVAGPAPVKEEPAQPSSAGLLLDGTPATL) is disordered. A DDE-1 domain is found at 239-364 (DEQIYNANVT…CLQQKAVLLV (126 aa)). Residues 543 to 583 (GLPEGCGEEVAPAAPPSPASLPSSIGAGEEEEEEATEQGGV) form a disordered region.

This sequence belongs to the tigger transposable element derived protein family.

It is found in the nucleus. This Rattus norvegicus (Rat) protein is Tigger transposable element derived 5 (Tigd5).